Here is a 77-residue protein sequence, read N- to C-terminus: Translation initiation factor IF-1, chloroplastic (77 aa).

In terms of domain architecture, S1-like spans 1 to 71 (MKEQKLIHEG…TRGRIIYRLR (71 aa)).

It belongs to the IF-1 family. In terms of assembly, component of the 30S ribosomal translation pre-initiation complex which assembles on the 30S ribosome in the order IF-2 and IF-3, IF-1 and N-formylmethionyl-tRNA(fMet); mRNA recruitment can occur at any time during PIC assembly.

It is found in the plastid. The protein resides in the chloroplast. Functionally, one of the essential components for the initiation of protein synthesis. Stabilizes the binding of IF-2 and IF-3 on the 30S subunit to which N-formylmethionyl-tRNA(fMet) subsequently binds. Helps modulate mRNA selection, yielding the 30S pre-initiation complex (PIC). Upon addition of the 50S ribosomal subunit IF-1, IF-2 and IF-3 are released leaving the mature 70S translation initiation complex. The polypeptide is Translation initiation factor IF-1, chloroplastic (Calycanthus floridus var. glaucus (Eastern sweetshrub)).